A 209-amino-acid polypeptide reads, in one-letter code: MLVKICGVARPEDVALLDGLVDYIGFIVEPSSPRSVEPRRLGELVRLVRESRPVLVTASLPPAEAVDLAASLGIPVVQHHGSLGDGHFSYAEERGVALAPVAVYRRGADLRAAVSQLLSKPHEYVLVDAEKGSRERYEGGLKIPLQALAEVAHMGKVALAGGITPENAHLVAALRPYMVDVASGVESSPGVKDPGKVKALLRALGRLSG.

This sequence belongs to the TrpF family.

It carries out the reaction N-(5-phospho-beta-D-ribosyl)anthranilate = 1-(2-carboxyphenylamino)-1-deoxy-D-ribulose 5-phosphate. Its pathway is amino-acid biosynthesis; L-tryptophan biosynthesis; L-tryptophan from chorismate: step 3/5. The polypeptide is N-(5'-phosphoribosyl)anthranilate isomerase (Pyrobaculum islandicum (strain DSM 4184 / JCM 9189 / GEO3)).